The sequence spans 1007 residues: Calmodulin-binding transcription activator 1 (1007 aa).

The CG-1 DNA-binding region spans 18–144 (MEQLLSEAQH…YLEVKGNRTS (127 aa)). A compositionally biased stretch (polar residues) spans 148–164 (KENNSNSVNGTASVNID). The interval 148–227 (KENNSNSVNG…VHGNRVRESD (80 aa)) is disordered. A compositionally biased stretch (low complexity) spans 165–176 (STASPTSTLSSL). Positions 183 to 202 (GDSQQASSVLRPSPEPQTGN) are enriched in polar residues. The transcription activation stretch occupies residues 233–398 (DVRALDTVGN…TVECETAAAG (166 aa)). ANK repeat units follow at residues 612–641 (DGQG…NINF) and 645–674 (NGWS…DAGA). 2 consecutive IQ domains span residues 821–850 (LSCA…RIVK) and 844–873 (IRQR…SVGL). Positions 869–891 (WSVGLLEKIILRWRRKGNGLRGF) are calmodulin-binding. A coiled-coil region spans residues 915–943 (QEDEYDYLKEGRKQTEERLQKALTRVKSM). Ser-942 is subject to Phosphoserine.

It belongs to the CAMTA family. Expressed in roots, stems, leaves, pollen and siliques.

It is found in the nucleus. In terms of biological role, transcription activator that binds calmodulin in a calcium-dependent manner in vitro. Binds to the DNA consensus sequence 5'-[ACG]CGCG[GTC]-3'. Regulates transcriptional activity in response to calcium signals. Involved in freezing tolerance. Involved in freezing tolerance in association with CAMTA2 and CAMTA3. Contributes together with CAMTA2 and CAMTA3 to the positive regulation of the cold-induced expression of DREB1A/CBF3, DREB1B/CBF1 and DREB1C/CBF2. Involved in drought stress responses by regulating several drought-responsive genes. Involved in auxin signaling and responses to abiotic stresses. Activates the expression of the V-PPase proton pump AVP1 in pollen. The protein is Calmodulin-binding transcription activator 1 of Arabidopsis thaliana (Mouse-ear cress).